Consider the following 763-residue polypeptide: Lysine-specific histone demethylase 1 homolog 2 (763 aa).

The SWIRM domain maps to 53 to 152 (QRETETEALI…FGVSAAFPAS (100 aa)). FAD contacts are provided by Glu-192, Arg-194, Arg-200, and Glu-571.

The protein belongs to the flavin monoamine oxidase family. FAD is required as a cofactor.

Its function is as follows. Probable histone demethylase. The sequence is that of Lysine-specific histone demethylase 1 homolog 2 from Oryza sativa subsp. japonica (Rice).